A 145-amino-acid polypeptide reads, in one-letter code: Protoporphyrinogen IX oxidase (145 aa).

4 consecutive transmembrane segments (helical) span residues Leu-6–Leu-26, Ala-61–Leu-81, Thr-83–Ala-103, and Ile-123–Pro-143. His-12 lines the heme pocket. Lys-88 is a heme binding site.

Belongs to the HemJ family. As to quaternary structure, homodimer. Heme b serves as cofactor.

It localises to the cell membrane. It carries out the reaction protoporphyrinogen IX + 3 A = protoporphyrin IX + 3 AH2. Its pathway is porphyrin-containing compound metabolism; protoporphyrin-IX biosynthesis; protoporphyrin-IX from protoporphyrinogen-IX: step 1/1. Catalyzes the oxidation of protoporphyrinogen IX to protoporphyrin IX. Is involved in the biosynthesis of tetrapyrrole molecules like heme. Does not use oxygen or artificial electron acceptors such as menadione or benzoquinone. This is Protoporphyrinogen IX oxidase from Rickettsia prowazekii (strain Madrid E).